The sequence spans 1047 residues: Formin-like protein 3 (1047 aa).

Residue G2 is the site of N-myristoyl glycine attachment. The region spanning 22-462 (VPMPDPTELE…AAFQRHNNIE (441 aa)) is the GBD/FH3 domain. Residues 520-561 (AVPVEAVAPPPPPPPPPPPPPPAPPLPSEVESIPIPPPPPPP) form a disordered region. Residues 527 to 546 (APPPPPPPPPPPPPPAPPLP) show a composition bias toward pro residues. Positions 580–970 (IKKPIKTKFR…MREKLLAQEA (391 aa)) constitute an FH2 domain. One can recognise a DAD domain in the interval 1000-1037 (DHRPVYEGKDGTIEDIITVLKSVPFTARTAKRGSRFFC).

The protein belongs to the formin homology family.

The protein localises to the cytoplasm. It localises to the cell membrane. In terms of biological role, required for developmental angiogenesis, but not for vasculogenesis. The polypeptide is Formin-like protein 3 (fmnl3) (Danio rerio (Zebrafish)).